The chain runs to 278 residues: 4-deoxy-L-threo-5-hexosulose-uronate ketol-isomerase (278 aa).

4 residues coordinate Zn(2+): His196, His198, Glu203, and His245.

The protein belongs to the KduI family. Requires Zn(2+) as cofactor.

It catalyses the reaction 5-dehydro-4-deoxy-D-glucuronate = 3-deoxy-D-glycero-2,5-hexodiulosonate. Its pathway is glycan metabolism; pectin degradation; 2-dehydro-3-deoxy-D-gluconate from pectin: step 4/5. Its function is as follows. Catalyzes the isomerization of 5-dehydro-4-deoxy-D-glucuronate to 3-deoxy-D-glycero-2,5-hexodiulosonate. The protein is 4-deoxy-L-threo-5-hexosulose-uronate ketol-isomerase of Salmonella heidelberg (strain SL476).